The primary structure comprises 273 residues: Formamidopyrimidine-DNA glycosylase (273 aa).

P2 serves as the catalytic Schiff-base intermediate with DNA. E3 functions as the Proton donor in the catalytic mechanism. The Proton donor; for beta-elimination activity role is filled by K59. Residues H92 and R111 each contribute to the DNA site. The segment at K239–K273 adopts an FPG-type zinc-finger fold. The Proton donor; for delta-elimination activity role is filled by R263.

This sequence belongs to the FPG family. Monomer. Zn(2+) is required as a cofactor.

It carries out the reaction Hydrolysis of DNA containing ring-opened 7-methylguanine residues, releasing 2,6-diamino-4-hydroxy-5-(N-methyl)formamidopyrimidine.. The enzyme catalyses 2'-deoxyribonucleotide-(2'-deoxyribose 5'-phosphate)-2'-deoxyribonucleotide-DNA = a 3'-end 2'-deoxyribonucleotide-(2,3-dehydro-2,3-deoxyribose 5'-phosphate)-DNA + a 5'-end 5'-phospho-2'-deoxyribonucleoside-DNA + H(+). Its function is as follows. Involved in base excision repair of DNA damaged by oxidation or by mutagenic agents. Acts as a DNA glycosylase that recognizes and removes damaged bases. Has a preference for oxidized purines, such as 7,8-dihydro-8-oxoguanine (8-oxoG). Has AP (apurinic/apyrimidinic) lyase activity and introduces nicks in the DNA strand. Cleaves the DNA backbone by beta-delta elimination to generate a single-strand break at the site of the removed base with both 3'- and 5'-phosphates. The protein is Formamidopyrimidine-DNA glycosylase of Listeria monocytogenes serovar 1/2a (strain ATCC BAA-679 / EGD-e).